The primary structure comprises 274 residues: uncharacterized protein (274 aa).

104 to 111 (GVFAIGKS) serves as a coordination point for ATP.

This is an uncharacterized protein from Mycoplasma genitalium (strain ATCC 33530 / DSM 19775 / NCTC 10195 / G37) (Mycoplasmoides genitalium).